The primary structure comprises 805 residues: Polyribonucleotide nucleotidyltransferase (805 aa).

Residues aspartate 491 and aspartate 497 each contribute to the Mg(2+) site. Positions 558 to 617 (PRMESMIIDKNKIKNVIGTGGKNVREICEKTGVKIEISQDGTVMIYAVSRDAVEEAKNMI) constitute a KH domain. The S1 motif domain occupies 627–694 (GKVFSGVISE…DKDHVQLSMR (68 aa)). The tract at residues 702–805 (DLLEHESYSS…GGGNKKPRFF (104 aa)) is disordered. Positions 709-721 (YSSSKKNGPQSGD) are enriched in polar residues.

This sequence belongs to the polyribonucleotide nucleotidyltransferase family. Mg(2+) serves as cofactor.

It is found in the cytoplasm. The enzyme catalyses RNA(n+1) + phosphate = RNA(n) + a ribonucleoside 5'-diphosphate. Functionally, involved in mRNA degradation. Catalyzes the phosphorolysis of single-stranded polyribonucleotides processively in the 3'- to 5'-direction. The chain is Polyribonucleotide nucleotidyltransferase from Anaplasma marginale (strain St. Maries).